We begin with the raw amino-acid sequence, 201 residues long: LIM domain-containing protein PLIM2b (201 aa).

LIM zinc-binding domains follow at residues 8-68 (DKCT…LFKE) and 103-163 (DKCA…LFME). The segment at 171–201 (KKKSESQEVLPEVVPEEQPAPPPPDENREDN) is disordered. Over residues 177-187 (QEVLPEVVPEE) the composition is skewed to low complexity.

In terms of assembly, interacts with NEK3.

The chain is LIM domain-containing protein PLIM2b from Oryza sativa subsp. japonica (Rice).